A 225-amino-acid chain; its full sequence is PKHD-type hydroxylase YbiX (225 aa).

In terms of domain architecture, Fe2OG dioxygenase spans Thr78–Ser177. 3 residues coordinate Fe cation: His96, Asp98, and His158. Arg168 provides a ligand contact to 2-oxoglutarate.

Requires Fe(2+) as cofactor. The cofactor is L-ascorbate.

The chain is PKHD-type hydroxylase YbiX from Escherichia fergusonii (strain ATCC 35469 / DSM 13698 / CCUG 18766 / IAM 14443 / JCM 21226 / LMG 7866 / NBRC 102419 / NCTC 12128 / CDC 0568-73).